Consider the following 373-residue polypeptide: Glutamate 5-kinase (373 aa).

Lys15 is a binding site for ATP. 3 residues coordinate substrate: Ser55, Asp142, and Asn154. 174–175 (TD) serves as a coordination point for ATP. Residues 281–359 (RGSVVLDDGA…SQIEAVLGYV (79 aa)) form the PUA domain.

Belongs to the glutamate 5-kinase family.

The protein localises to the cytoplasm. The enzyme catalyses L-glutamate + ATP = L-glutamyl 5-phosphate + ADP. Its pathway is amino-acid biosynthesis; L-proline biosynthesis; L-glutamate 5-semialdehyde from L-glutamate: step 1/2. Functionally, catalyzes the transfer of a phosphate group to glutamate to form L-glutamate 5-phosphate. This Nitrosomonas eutropha (strain DSM 101675 / C91 / Nm57) protein is Glutamate 5-kinase.